Consider the following 498-residue polypeptide: PHD finger protein 10 (498 aa).

Low complexity predominate over residues 1–10; that stretch reads MAAAAGPGAA. A disordered region spans residues 1 to 62; sequence MAAAAGPGAA…SSRSCETSSQ (62 aa). Position 2 is an N-acetylalanine (alanine 2). Phosphoserine is present on residues serine 12, serine 36, and serine 50. Residues 89–185 are essential to induce neural progenitor proliferation; that stretch reads MLQEQVSEYL…HYKEYSQMQQ (97 aa). Residues 89–295 form an SAY region; that stretch reads MLQEQVSEYL…PPLDPELPAL (207 aa). Residue lysine 241 forms a Glycyl lysine isopeptide (Lys-Gly) (interchain with G-Cter in SUMO2) linkage. Serine 270 is modified (phosphoserine). A compositionally biased stretch (low complexity) spans 285–296; sequence EPPLDPELPALD. Positions 285–368 are disordered; sequence EPPLDPELPA…KRSVLSKSVP (84 aa). The segment at 292 to 334 is essential to induce neural progenitor proliferation; that stretch reads LPALDSDGDSDDGEDGRGDEKRKNKGTSDSSSGNVSEGESPPD. Serine 297, serine 301, serine 327, and serine 331 each carry phosphoserine. A compositionally biased stretch (polar residues) spans 318-328; it reads TSDSSSGNVSE. Basic and acidic residues predominate over residues 345–359; it reads KSKDKAATPRKDGPK. The PHD-type 1; degenerate zinc finger occupies 379–436; it reads ICGICLKGKESNKKGKAESLIHCSQCENSGHPSCLDMTMELVSMIKTYPWQCMECKTC. A Glycyl lysine isopeptide (Lys-Gly) (interchain with G-Cter in SUMO2) cross-link involves residue lysine 385. A PHD-type 2; degenerate zinc finger spans residues 438-481; the sequence is ICGQPHHEEEMMFCDMCDRGYHTFCVGLGAIPSGRWICDCCQRA.

This sequence belongs to the SAYP family. Component of neural progenitors-specific chromatin remodeling complex (npBAF complex) composed of at least, ARID1A/BAF250A or ARID1B/BAF250B, SMARCD1/BAF60A, SMARCD3/BAF60C, SMARCA2/BRM/BAF190B, SMARCA4/BRG1/BAF190A, SMARCB1/BAF47, SMARCC1/BAF155, SMARCE1/BAF57, SMARCC2/BAF170, PHF10/BAF45A, ACTL6A/BAF53A and actin. Interacts with ACTL6A/BAF53A, SMARCA2/BRM/BAF190B, SMARCA4/BRG1/BAF190A and PBRM1/BAF180.

Its subcellular location is the nucleus. Involved in transcription activity regulation by chromatin remodeling. Belongs to the neural progenitors-specific chromatin remodeling complex (npBAF complex) and is required for the proliferation of neural progenitors. During neural development a switch from a stem/progenitor to a post-mitotic chromatin remodeling mechanism occurs as neurons exit the cell cycle and become committed to their adult state. The transition from proliferating neural stem/progenitor cells to post-mitotic neurons requires a switch in subunit composition of the npBAF and nBAF complexes. As neural progenitors exit mitosis and differentiate into neurons, npBAF complexes which contain ACTL6A/BAF53A and PHF10/BAF45A, are exchanged for homologous alternative ACTL6B/BAF53B and DPF1/BAF45B or DPF3/BAF45C subunits in neuron-specific complexes (nBAF). The npBAF complex is essential for the self-renewal/proliferative capacity of the multipotent neural stem cells. The nBAF complex along with CREST plays a role regulating the activity of genes essential for dendrite growth. The polypeptide is PHD finger protein 10 (PHF10) (Homo sapiens (Human)).